The chain runs to 293 residues: Ribosomal protein L11 methyltransferase (293 aa).

4 residues coordinate S-adenosyl-L-methionine: Thr-145, Gly-166, Asp-188, and Asn-230.

The protein belongs to the methyltransferase superfamily. PrmA family.

The protein localises to the cytoplasm. The enzyme catalyses L-lysyl-[protein] + 3 S-adenosyl-L-methionine = N(6),N(6),N(6)-trimethyl-L-lysyl-[protein] + 3 S-adenosyl-L-homocysteine + 3 H(+). Functionally, methylates ribosomal protein L11. The sequence is that of Ribosomal protein L11 methyltransferase from Yersinia pseudotuberculosis serotype O:3 (strain YPIII).